The primary structure comprises 247 residues: Adenosylcobinamide-GDP ribazoletransferase (247 aa).

A run of 5 helical transmembrane segments spans residues 34–54 (IITF…VFMV), 59–79 (CGVP…TGGF), 113–133 (GGLA…ELAL), 138–158 (ILAS…LLMY), and 194–214 (VLLP…AIFI).

The protein belongs to the CobS family. Mg(2+) is required as a cofactor.

Its subcellular location is the cell inner membrane. It catalyses the reaction alpha-ribazole + adenosylcob(III)inamide-GDP = adenosylcob(III)alamin + GMP + H(+). The catalysed reaction is alpha-ribazole 5'-phosphate + adenosylcob(III)inamide-GDP = adenosylcob(III)alamin 5'-phosphate + GMP + H(+). It participates in cofactor biosynthesis; adenosylcobalamin biosynthesis; adenosylcobalamin from cob(II)yrinate a,c-diamide: step 7/7. In terms of biological role, joins adenosylcobinamide-GDP and alpha-ribazole to generate adenosylcobalamin (Ado-cobalamin). Also synthesizes adenosylcobalamin 5'-phosphate from adenosylcobinamide-GDP and alpha-ribazole 5'-phosphate. This Shigella dysenteriae serotype 1 (strain Sd197) protein is Adenosylcobinamide-GDP ribazoletransferase.